Consider the following 242-residue polypeptide: Myogenic factor 6 (242 aa).

Residues 31-63 (SPLYPGSDGTLSPCQDQMPQEAGSDSSGEEHVL) form a disordered region. Polar residues predominate over residues 39 to 56 (GTLSPCQDQMPQEAGSDS). One can recognise a bHLH domain in the interval 93–144 (DRRKAATLRERRRLKKINEAFEALKRRTVANPNQRLPKVEILRSAISYIERL).

As to quaternary structure, efficient DNA binding requires dimerization with another bHLH protein. Interacts with CSRP3. As to expression, skeletal muscle.

It localises to the nucleus. In terms of biological role, involved in muscle differentiation (myogenic factor). Induces fibroblasts to differentiate into myoblasts. Probable sequence specific DNA-binding protein. In Mus musculus (Mouse), this protein is Myogenic factor 6 (Myf6).